A 66-amino-acid polypeptide reads, in one-letter code: Large ribosomal subunit protein bL35 (66 aa).

Belongs to the bacterial ribosomal protein bL35 family.

This chain is Large ribosomal subunit protein bL35, found in Beijerinckia indica subsp. indica (strain ATCC 9039 / DSM 1715 / NCIMB 8712).